The chain runs to 191 residues: Protein Ves (191 aa).

The protein belongs to the Ves family.

This chain is Protein Ves, found in Escherichia coli (strain K12 / MC4100 / BW2952).